A 561-amino-acid polypeptide reads, in one-letter code: Putative transport protein YbjL (561 aa).

The next 5 membrane-spanning stretches (helical) occupy residues 8 to 28, 32 to 52, 66 to 86, 94 to 114, and 158 to 178; these read LLNGNYILLLFVVLALGLCLG, LGSIQLGNSIGVLVVSLLLGQ, FMLFIFCVGVEAGPNFFSIFF, MLALVMVGSALVIALGLGKLF, and NLSLGYALTYLIGLVSLIVGA. 2 consecutive RCK C-terminal domains span residues 200–288 and 292–373; these read RGLD…SFRN and VFDR…RIGF. 5 consecutive transmembrane segments (helical) span residues 383–403, 406–426, 451–471, 475–495, and 540–560; these read LLAFCAFFVIGLMIGMITFQF, FSFGMGNAAGLLFAGIMLGFM, VFMAGVGLSAGSGINNGLGAI, MLIAGLIVSLVPVVICFLFGA, and AIANVLLTLAGTIIVMVWPGL.

It belongs to the AAE transporter (TC 2.A.81) family. YbjL subfamily.

The protein localises to the cell membrane. The sequence is that of Putative transport protein YbjL from Shigella boydii serotype 4 (strain Sb227).